The following is a 505-amino-acid chain: Midnolin (505 aa).

The Ubiquitin-like domain occupies 32–106 (MSLAIHSTTG…LTLVPTVEAG (75 aa)). 3 disordered regions span residues 155 to 176 (PWHR…VSDF), 228 to 305 (SIAT…SRKP), and 440 to 485 (RLRR…GLDF). Low complexity predominate over residues 238-262 (RPVSSAARVPPVSSSPSSPVSPSPV). A compositionally biased stretch (polar residues) spans 263 to 282 (TAGTFQSHAASTTCPEQTDC). Residues 283–300 (SPPASSNTTSTPGSSPTP) show a composition bias toward low complexity.

Interacts with GCK; the interaction occurs preferentially at low glucose levels. Interacts with the proteasome.

Its subcellular location is the nucleus. It is found in the cytoplasm. The protein localises to the cytosol. The protein resides in the nucleolus. Facilitates the ubiquitin-independent proteasomal degradation of stimulus-induced transcription factors such as FOSB, EGR1, NR4A1, and IRF4 to the proteasome for degradation. Promotes also the degradation of other substrates such as CBX4. Plays a role in inhibiting the activity of glucokinase GCK and both glucose-induced and basal insulin secretion. The chain is Midnolin from Rattus norvegicus (Rat).